A 1002-amino-acid polypeptide reads, in one-letter code: yemanuclein (1002 aa).

The Nuclear localization signal signature appears at 80–85; that stretch reads KKKTKK. Disordered stretches follow at residues 193–358, 395–428, and 642–725; these read AIIK…KKVV, VSTDVSSSDSSDMESEHGRADRQAGQHGKDGQEN, and KLKA…AKQV. Residues 207-217 show a composition bias toward low complexity; it reads SSSSESSSSSS. Positions 218–262 are enriched in acidic residues; it reads GDDDENDDGNNEEDDESDSEDDSEENDESDSEDDSESESLEDEDS. Repeat copies occupy residues 230-241 and 242-253. The tract at residues 230 to 253 is 2 X 12 AA tandem repeats; that stretch reads EDDESDSEDDSEENDESDSEDDSE. Low complexity-rich tracts occupy residues 286 to 320, 336 to 358, and 395 to 404; these read TGKSKPSSSSLTSGKKPPTKPITTSSSSNSPRPST, QPSSQLQSLPQSQAQAQALKKVV, and VSTDVSSSDS. Residues 408-427 are compositionally biased toward basic and acidic residues; it reads ESEHGRADRQAGQHGKDGQE. The span at 653–667 shows a compositional bias: low complexity; the sequence is PASASPKPVGVVSAP. Positions 679–689 are enriched in basic and acidic residues; the sequence is AVEDPRSRGNS. Serine 685 and serine 689 each carry phosphoserine. Residues 690 to 701 show a composition bias toward low complexity; that stretch reads DTDSATSASSNS. 3 positions are modified to phosphoserine: serine 885, serine 886, and serine 887. The disordered stretch occupies residues 901 to 928; it reads SKPQKKVQSKPKNKTQNRGRSSLGAVGQ. The segment covering 903–917 has biased composition (basic residues); it reads PQKKVQSKPKNKTQN.

Post-translationally, the N-terminus is blocked. Oocyte specific.

The protein localises to the nucleus. Its subcellular location is the nucleoplasm. The protein resides in the chromosome. It is found in the centromere. It localises to the kinetochore. Its function is as follows. May play a key role in egg organization. May be a transcriptional regulator having a role in chromatin remodeling in concert with Hira, a histone chaperone. Involved in chromosome segregation by affecting kinetochores function in the first meiotic division. This Drosophila melanogaster (Fruit fly) protein is yemanuclein.